The sequence spans 347 residues: 3-isopropylmalate dehydrogenase (347 aa).

Substrate-binding residues include Arg-87, Arg-97, Arg-121, and Asp-212. Asp-212, Asp-236, and Asp-240 together coordinate Mg(2+). Position 272–284 (272–284 (GSAPDIAGQGTAD)) interacts with NAD(+).

This sequence belongs to the isocitrate and isopropylmalate dehydrogenases family. LeuB type 2 subfamily. As to quaternary structure, homodimer. Mg(2+) serves as cofactor. It depends on Mn(2+) as a cofactor.

The protein localises to the cytoplasm. The catalysed reaction is (2R,3S)-3-isopropylmalate + NAD(+) = 4-methyl-2-oxopentanoate + CO2 + NADH. It functions in the pathway amino-acid biosynthesis; L-leucine biosynthesis; L-leucine from 3-methyl-2-oxobutanoate: step 3/4. Its function is as follows. Catalyzes the oxidation of 3-carboxy-2-hydroxy-4-methylpentanoate (3-isopropylmalate) to 3-carboxy-4-methyl-2-oxopentanoate. The product decarboxylates to 4-methyl-2 oxopentanoate. The sequence is that of 3-isopropylmalate dehydrogenase from Saccharopolyspora erythraea (strain ATCC 11635 / DSM 40517 / JCM 4748 / NBRC 13426 / NCIMB 8594 / NRRL 2338).